Consider the following 339-residue polypeptide: Olfactory receptor 7E24 (339 aa).

At 1 to 43 (MSYFPILFFFFLKRCPSYTEPQNLTGVSEFLLLGLSEDPELQP) the chain is on the extracellular side. Asn23 is a glycosylation site (N-linked (GlcNAc...) asparagine). The chain crosses the membrane as a helical span at residues 44 to 64 (VLAGLFLSMYLVTVLGNLLII). At 65–72 (LAVSSDSH) the chain is on the cytoplasmic side. A helical transmembrane segment spans residues 73-93 (LHTPMYFFLSNLSLADIGFTS). Over 94 to 117 (TTVPKMIVDMQTHSRVISYEGCLT) the chain is Extracellular. A disulfide bridge connects residues Cys115 and Cys207. The helical transmembrane segment at 118 to 138 (QMSFFVLFACMDDMLLSVMAY) threads the bilayer. Residues 139–157 (DRFVAICHPLHYRIIMNPR) are Cytoplasmic-facing. A helical transmembrane segment spans residues 158–178 (LCGFLILLSFFISLLDSQLHN). Residues 179–215 (LIMLQLTCFKDVDISNFFCDPSQLLHLRCSDTFINEM) lie on the Extracellular side of the membrane. The chain crosses the membrane as a helical span at residues 216–235 (VIYFMGAIFGCLPISGILFS). Residues 236 to 255 (YYKIVSPILRVPTSDGKYKA) are Cytoplasmic-facing. A helical transmembrane segment spans residues 256-276 (FSTCGSHLAVVCLFYGTGLVG). Topologically, residues 277 to 289 (YLSSAVLPSPRKS) are extracellular. Residues 290–310 (MVASVMYTVVTPMLNPFIYSL) form a helical membrane-spanning segment. Residues 311–339 (RNKDIQSALCRLHGRIIKSHHLHPFCYMG) are Cytoplasmic-facing.

This sequence belongs to the G-protein coupled receptor 1 family.

The protein resides in the cell membrane. Odorant receptor. In Homo sapiens (Human), this protein is Olfactory receptor 7E24 (OR7E24).